The following is a 357-amino-acid chain: Homoserine kinase (357 aa).

Residue lysine 133 forms a Glycyl lysine isopeptide (Lys-Gly) (interchain with G-Cter in ubiquitin) linkage.

The protein belongs to the GHMP kinase family. Homoserine kinase subfamily. As to quaternary structure, homodimer.

It carries out the reaction L-homoserine + ATP = O-phospho-L-homoserine + ADP + H(+). It functions in the pathway amino-acid biosynthesis; L-threonine biosynthesis; L-threonine from L-aspartate: step 4/5. Functionally, commits homoserine to the threonine biosynthesis pathway by catalyzing its O-phosphorylation. The protein is Homoserine kinase (THR1) of Saccharomyces cerevisiae (strain ATCC 204508 / S288c) (Baker's yeast).